The following is a 1346-amino-acid chain: Cytokinesis protein sepH (1346 aa).

The disordered stretch occupies residues M1–S50. Over residues S35–S50 the composition is skewed to basic and acidic residues. One can recognise a Protein kinase domain in the interval Y60–I310. Residues L66–V74 and K89 each bind ATP. D182 serves as the catalytic Proton acceptor. Disordered regions lie at residues R342 to V380, D446 to R497, and L1211 to S1295. 2 stretches are compositionally biased toward polar residues: residues Q477–G489 and R1220–K1249.

The protein belongs to the protein kinase superfamily. Ser/Thr protein kinase family. CDC7 subfamily. It depends on Mg(2+) as a cofactor.

It catalyses the reaction L-seryl-[protein] + ATP = O-phospho-L-seryl-[protein] + ADP + H(+). The enzyme catalyses L-threonyl-[protein] + ATP = O-phospho-L-threonyl-[protein] + ADP + H(+). Required for early events during cytokinesis including localization of cytoskeletal components to the cytokinetic ring. The sequence is that of Cytokinesis protein sepH from Emericella nidulans (strain FGSC A4 / ATCC 38163 / CBS 112.46 / NRRL 194 / M139) (Aspergillus nidulans).